The primary structure comprises 72 residues: Translation initiation factor IF-1 (72 aa).

In terms of domain architecture, S1-like spans 1-72 (MAKDDVIEVE…NRGRITYRFK (72 aa)). Y60 carries the phosphotyrosine modification.

The protein belongs to the IF-1 family. In terms of assembly, component of the 30S ribosomal translation pre-initiation complex which assembles on the 30S ribosome in the order IF-2 and IF-3, IF-1 and N-formylmethionyl-tRNA(fMet); mRNA recruitment can occur at any time during PIC assembly.

It is found in the cytoplasm. One of the essential components for the initiation of protein synthesis. Stabilizes the binding of IF-2 and IF-3 on the 30S subunit to which N-formylmethionyl-tRNA(fMet) subsequently binds. Helps modulate mRNA selection, yielding the 30S pre-initiation complex (PIC). Upon addition of the 50S ribosomal subunit IF-1, IF-2 and IF-3 are released leaving the mature 70S translation initiation complex. This Bacillus thuringiensis (strain Al Hakam) protein is Translation initiation factor IF-1.